The primary structure comprises 858 residues: Bifunctional uridylyltransferase/uridylyl-removing enzyme (858 aa).

The segment at 1–324 (MSASVAEPPP…PATSGVTRVL (324 aa)) is uridylyltransferase. The interval 325–681 (SPGRFVEKQG…ARPSPVGDAL (357 aa)) is uridylyl-removing. One can recognise an HD domain in the interval 443-565 (VDQHILMVLR…VGSERRLTAL (123 aa)). ACT domains follow at residues 682-761 (QVLV…PEPS) and 790-858 (ILSV…AIAV).

The protein belongs to the GlnD family. Mg(2+) serves as cofactor.

It catalyses the reaction [protein-PII]-L-tyrosine + UTP = [protein-PII]-uridylyl-L-tyrosine + diphosphate. The enzyme catalyses [protein-PII]-uridylyl-L-tyrosine + H2O = [protein-PII]-L-tyrosine + UMP + H(+). Its activity is regulated as follows. Uridylyltransferase (UTase) activity is inhibited by glutamine, while glutamine activates uridylyl-removing (UR) activity. Functionally, modifies, by uridylylation and deuridylylation, the PII regulatory proteins (GlnB and homologs), in response to the nitrogen status of the cell that GlnD senses through the glutamine level. Under low glutamine levels, catalyzes the conversion of the PII proteins and UTP to PII-UMP and PPi, while under higher glutamine levels, GlnD hydrolyzes PII-UMP to PII and UMP (deuridylylation). Thus, controls uridylylation state and activity of the PII proteins, and plays an important role in the regulation of nitrogen assimilation and metabolism. The protein is Bifunctional uridylyltransferase/uridylyl-removing enzyme of Burkholderia pseudomallei (strain 1106a).